We begin with the raw amino-acid sequence, 574 residues long: MSSGLILLIVAIVLLVIIAYLVGVIIRKRNDTLITSLEERKQALFGLPVNDEIEEVKSLHLIGQSQTSFREWNQKWVDLTLNTFTDIEKHIFEAEHLNDTFNFIRAKHEINSVESQLNLVEEDITAIREALGILKEQEEKNSARVTHALDLYEKLQASVAENEDNFGSTMAEIEKQMKNIEAEFSQFVALNSSGDPVEAAEVLDKAEEHTIALGQITEQIPAIVAKLEDDFPDQLDDLETGYRRLLEENYHFPEKNIEARFQEIRESIRANSSELVTLDLDRARDENTHIQERIDSLYELFEREIAAYKVVAKNSKILPRYLAHAKHNNEQLKHEIARLSRKYILSENEGLNIKAFDKDLKDIEDNVLEIAEAFDQQEKPFSELQLILDRSIKTLASVESGQMDVFAAVKDIEKIESQARQHLEIYVTQLHMIKRYMEKRNLPGIPQDFLSTFFTTSSQLEALMDELSRGRINIEAVSRLSEVATAAIANLEELTYQVVQHATLTEQLLQYSNRYRSFEAGVQNSFEHALKLFEVDNDYQASFDEISYALETVEPGVTERFVNSYEKTRERIRF.

The Extracellular segment spans residues 1–7 (MSSGLIL). A helical transmembrane segment spans residues 8–26 (LIVAIVLLVIIAYLVGVII). Topologically, residues 27-574 (RKRNDTLITS…YEKTRERIRF (548 aa)) are cytoplasmic. Coiled-coil stretches lie at residues 102–131 (NFIRAKHEINSVESQLNLVEEDITAIREAL), 161–190 (ENEDNFGSTMAEIEKQMKNIEAEFSQFVAL), 276–379 (VTLD…QQEK), and 459–493 (QLEALMDELSRGRINIEAVSRLSEVATAAIANLEE).

This sequence belongs to the EzrA family.

The protein localises to the cell membrane. Negative regulator of FtsZ ring formation; modulates the frequency and position of FtsZ ring formation. Inhibits FtsZ ring formation at polar sites. Interacts either with FtsZ or with one of its binding partners to promote depolymerization. This is Septation ring formation regulator EzrA from Streptococcus equi subsp. zooepidemicus (strain MGCS10565).